A 293-amino-acid chain; its full sequence is GTP cyclohydrolase FolE2 (293 aa).

This sequence belongs to the GTP cyclohydrolase IV family.

The catalysed reaction is GTP + H2O = 7,8-dihydroneopterin 3'-triphosphate + formate + H(+). Its pathway is cofactor biosynthesis; 7,8-dihydroneopterin triphosphate biosynthesis; 7,8-dihydroneopterin triphosphate from GTP: step 1/1. Converts GTP to 7,8-dihydroneopterin triphosphate. In Pseudomonas entomophila (strain L48), this protein is GTP cyclohydrolase FolE2.